A 402-amino-acid chain; its full sequence is Type II NADH:quinone oxidoreductase (402 aa).

FAD-binding positions include 12–16, 39–40, and Val83; these read GAGYA and NK. The active site involves Glu172. Residues Asp302, 319 to 320, and Lys379 each bind FAD; that span reads AQ.

The protein belongs to the NADH dehydrogenase family. The cofactor is FAD.

The protein resides in the cell membrane. It catalyses the reaction a quinone + NADH + H(+) = a quinol + NAD(+). Functionally, alternative, nonproton pumping NADH:quinone oxidoreductase that delivers electrons to the respiratory chain by oxidation of NADH and reduction of quinones, and contributes to the regeneration of NAD(+). This Staphylococcus epidermidis (strain ATCC 12228 / FDA PCI 1200) protein is Type II NADH:quinone oxidoreductase.